The following is a 243-amino-acid chain: UPF0246 protein Spy49_1742 (243 aa).

Belongs to the UPF0246 family.

The polypeptide is UPF0246 protein Spy49_1742 (Streptococcus pyogenes serotype M49 (strain NZ131)).